Reading from the N-terminus, the 209-residue chain is Small ribosomal subunit protein uS4 (209 aa).

The S4 RNA-binding domain maps to Thr-98 to Leu-161.

The protein belongs to the universal ribosomal protein uS4 family. In terms of assembly, part of the 30S ribosomal subunit. Contacts protein S5. The interaction surface between S4 and S5 is involved in control of translational fidelity.

Its function is as follows. One of the primary rRNA binding proteins, it binds directly to 16S rRNA where it nucleates assembly of the body of the 30S subunit. With S5 and S12 plays an important role in translational accuracy. In Stenotrophomonas maltophilia (strain R551-3), this protein is Small ribosomal subunit protein uS4.